Here is a 549-residue protein sequence, read N- to C-terminus: Myotubularin-related protein 9 (549 aa).

Met1 carries the N-acetylmethionine modification. Residues Ala4 to Leu99 enclose the GRAM domain. One can recognise a Myotubularin phosphatase domain in the interval Gly123–Phe498. A coiled-coil region spans residues Leu508–Glu542. Ser548 carries the phosphoserine modification.

This sequence belongs to the protein-tyrosine phosphatase family. Non-receptor class myotubularin subfamily. As to quaternary structure, homodimer. Heterodimer (via C-terminus) with lipid phosphatase MTMR6 (via C-terminus). Heterodimer (via coiled coil domain) with lipid phosphatase MTMR7 (via C-terminus). Heterodimer with lipid phosphatase MTMR8. As to expression, expressed in many tissues.

The protein resides in the cytoplasm. Its subcellular location is the cell projection. It localises to the ruffle membrane. It is found in the perinuclear region. The protein localises to the endoplasmic reticulum. Its function is as follows. Acts as an adapter for myotubularin-related phosphatases. Increases lipid phosphatase MTMR6 catalytic activity, specifically towards phosphatidylinositol 3,5-bisphosphate and MTMR6 binding affinity for phosphorylated phosphatidylinositols. Positively regulates lipid phosphatase MTMR7 catalytic activity. Increases MTMR8 catalytic activity towards phosphatidylinositol 3-phosphate. The formation of the MTMR6-MTMR9 complex, stabilizes both MTMR6 and MTMR9 protein levels. Stabilizes MTMR8 protein levels. Plays a role in the late stages of macropinocytosis possibly by regulating MTMR6-mediated dephosphorylation of phosphatidylinositol 3-phosphate in membrane ruffles. Negatively regulates autophagy, in part via its association with MTMR8. Negatively regulates DNA damage-induced apoptosis, in part via its association with MTMR6. Does not bind mono-, di- and tri-phosphorylated phosphatidylinositols, phosphatidic acid and phosphatidylserine. In Homo sapiens (Human), this protein is Myotubularin-related protein 9 (MTMR9).